A 575-amino-acid polypeptide reads, in one-letter code: Dihydroxy-acid dehydratase (575 aa).

Positions 1–27 are disordered; sequence MSNQERQERPEKDPDLRSTEVTEGYEK. Cysteine 61 is a binding site for [2Fe-2S] cluster. A Mg(2+)-binding site is contributed by aspartate 93. Residue cysteine 134 coordinates [2Fe-2S] cluster. Mg(2+)-binding residues include aspartate 135 and lysine 136. Position 136 is an N6-carboxylysine (lysine 136). Position 206 (cysteine 206) interacts with [2Fe-2S] cluster. Glutamate 460 contacts Mg(2+). Serine 486 serves as the catalytic Proton acceptor.

It belongs to the IlvD/Edd family. In terms of assembly, homodimer. The cofactor is [2Fe-2S] cluster. It depends on Mg(2+) as a cofactor.

It catalyses the reaction (2R)-2,3-dihydroxy-3-methylbutanoate = 3-methyl-2-oxobutanoate + H2O. It carries out the reaction (2R,3R)-2,3-dihydroxy-3-methylpentanoate = (S)-3-methyl-2-oxopentanoate + H2O. Its pathway is amino-acid biosynthesis; L-isoleucine biosynthesis; L-isoleucine from 2-oxobutanoate: step 3/4. It functions in the pathway amino-acid biosynthesis; L-valine biosynthesis; L-valine from pyruvate: step 3/4. Its function is as follows. Functions in the biosynthesis of branched-chain amino acids. Catalyzes the dehydration of (2R,3R)-2,3-dihydroxy-3-methylpentanoate (2,3-dihydroxy-3-methylvalerate) into 2-oxo-3-methylpentanoate (2-oxo-3-methylvalerate) and of (2R)-2,3-dihydroxy-3-methylbutanoate (2,3-dihydroxyisovalerate) into 2-oxo-3-methylbutanoate (2-oxoisovalerate), the penultimate precursor to L-isoleucine and L-valine, respectively. The sequence is that of Dihydroxy-acid dehydratase from Haloarcula marismortui (strain ATCC 43049 / DSM 3752 / JCM 8966 / VKM B-1809) (Halobacterium marismortui).